Consider the following 158-residue polypeptide: Large ribosomal subunit protein uL30 (158 aa).

This sequence belongs to the universal ribosomal protein uL30 family. As to quaternary structure, part of the 50S ribosomal subunit.

The protein is Large ribosomal subunit protein uL30 of Saccharolobus solfataricus (strain ATCC 35092 / DSM 1617 / JCM 11322 / P2) (Sulfolobus solfataricus).